Here is a 1263-residue protein sequence, read N- to C-terminus: Kinesin-like protein KIN-12E (1263 aa).

A disordered region spans residues 21 to 44; sequence PAPSESLRSVPCTPEANTVSRDNH. Residues 35–44 show a composition bias toward polar residues; sequence EANTVSRDNH. The Kinesin motor domain occupies 93-430; the sequence is NVQVIIRTRP…LKFAQRAKLI (338 aa). 174 to 181 contacts ATP; the sequence is GQTGSGKT. Coiled-coil stretches lie at residues 679-737, 764-805, 831-881, 905-966, 1091-1168, and 1193-1251; these read SKKL…KIRS, AEAH…AEEN, ALEV…KRLL, SEKS…HQSE, TDLL…TIQE, and LRKE…VLSL.

This sequence belongs to the TRAFAC class myosin-kinesin ATPase superfamily. Kinesin family. KIN-12 subfamily.

The polypeptide is Kinesin-like protein KIN-12E (Arabidopsis thaliana (Mouse-ear cress)).